A 408-amino-acid chain; its full sequence is Pleckstrin homology domain-containing family O member 1 (408 aa).

The disordered stretch occupies residues 1 to 21; sequence MKKSGSGKRGPPDGNHQSAAP. Residues 20–131 enclose the PH domain; sequence APEKVGWVRK…WINALSSAIT (112 aa). The interval 132–192 is interaction with capping proteins (CPs); the sequence is RAKNRILDEV…MLTLDLIQEE (61 aa). Residues 135 to 307 form an interaction with ATM, CKIP, IFP35 and NMI region; that stretch reads NRILDEVTVE…PAQPGQLSRI (173 aa). The interval 217–264 is disordered; that stretch reads LAGSRRRADSDRIQPSSQRASSLSRPWEKPDKGAPYTPQALKKFPSTE. The residue at position 226 (S226) is a Phosphoserine. The span at 229–240 shows a compositional bias: polar residues; sequence IQPSSQRASSLS. Phosphoserine occurs at positions 270 and 341. The interval 307–408 is negative regulator of AP-1 activity; that stretch reads IQDLVARKLE…QHSQYRKSLM (102 aa). 2 disordered regions span residues 325-348 and 389-408; these read VQGL…SESE and TPDS…KSLM. Positions 389 to 401 are enriched in polar residues; it reads TPDSHLRQTSQHS.

Heterodimer or homodimer. Interacts with CK2 and actin capping subunits (capping protein CP-alpha and CP-beta). CKIP1 and CK2 together inhibit the activity of actin capping protein at the barbed ends of actin filaments. Interacts with ATM, IFP35, JUN, JUND, NMI and PI3K. Interacts with AKT1, AKT2 and AKT3 (each isozyme of PKB), PtdIns(3,5)P2, PtdIns(4,5)P2 and PtdIns(3,4,5)P2. C-terminal fragments could be released during apoptosis via caspase-3-dependent cleavage.

It localises to the cell membrane. It is found in the nucleus. Its subcellular location is the cytoplasm. Plays a role in the regulation of the actin cytoskeleton through its interactions with actin capping protein (CP). May function to target CK2 to the plasma membrane thereby serving as an adapter to facilitate the phosphorylation of CP by protein kinase 2 (CK2). Appears to target ATM to the plasma membrane. Appears to also inhibit tumor cell growth by inhibiting AKT-mediated cell-survival. Also implicated in PI3K-regulated muscle differentiation, the regulation of AP-1 activity (plasma membrane bound AP-1 regulator that translocates to the nucleus) and the promotion of apoptosis induced by tumor necrosis factor TNF. When bound to PKB, it inhibits it probably by decreasing PKB level of phosphorylation. This chain is Pleckstrin homology domain-containing family O member 1 (Plekho1), found in Mus musculus (Mouse).